Consider the following 693-residue polypeptide: MFRGGEKMRQIPKEVIEEVERLREEIEYHNYRYYVLNDPVITDEEYDRLMRRLIELERMYPELVTPDSPTQRVGGKVLEGFKTVKHSVPMLSLDNTYNEEEIIEFDKRVKKTLQESEVEYVAELKIDGVSIALRYENGRFVLGATRGDGVEGEDVSENVKTIRSVPLRLRKPLTIEVRGEIYMPVDEFKRLNEEREEEGLPPFANPRNAAAGTLRQLNTALVASRRLDSFIYYVVHPENYGLKTQWEALQFLKEIGFKVNPHSRLCKNIQEVIEYWREWKERKRELDYWVDGVVVKVNRFDFQKVLGETSKAPRWAIAFKFPAEQARTRILDVTIQVGRTGVLTPVAELEPVQLAGTIVKRASLHNFEYIREKDIRIGDYVFVEKAGGIIPQIVKSIPELRTGSEKEIKPPQSCPVCGGKVGKLSPDEVAIRCLNPHCPAKLKRALRTFVSREALDIEGLGEKIIDRLVDSGLVKDIADIFYLTPFDLAQLGPGIGQRTIAKILQEIEEAKKRPLHKLITGLGIPMVGQKTAKILAEHFKSLEAIAEASYETLKDIPGIGPEIARSIVEYFRNPKTREIIEKLKKAGVKLEEKTVKYDVLKGLTFAVTGTLKNFTREEIIEFLERLGARVVNSVSKNTDYLIVGENPGSKYEKAKALKVKTMSEEEFLRFVENRAKLKGYNFDEIMRGWKEWS.

Residues 43 to 47 (DEEYD), 92 to 93 (SL), and Glu-123 each bind NAD(+). The N6-AMP-lysine intermediate role is filled by Lys-125. Residues Arg-146, Glu-180, Lys-296, and Lys-320 each coordinate NAD(+). Zn(2+)-binding residues include Cys-414, Cys-417, Cys-433, and Cys-438. A BRCT domain is found at 595-684 (VKYDVLKGLT…AKLKGYNFDE (90 aa)).

This sequence belongs to the NAD-dependent DNA ligase family. LigA subfamily. Requires Mg(2+) as cofactor. It depends on Mn(2+) as a cofactor.

It catalyses the reaction NAD(+) + (deoxyribonucleotide)n-3'-hydroxyl + 5'-phospho-(deoxyribonucleotide)m = (deoxyribonucleotide)n+m + AMP + beta-nicotinamide D-nucleotide.. In terms of biological role, DNA ligase that catalyzes the formation of phosphodiester linkages between 5'-phosphoryl and 3'-hydroxyl groups in double-stranded DNA using NAD as a coenzyme and as the energy source for the reaction. It is essential for DNA replication and repair of damaged DNA. The polypeptide is DNA ligase (Thermotoga neapolitana (strain ATCC 49049 / DSM 4359 / NBRC 107923 / NS-E)).